The following is a 784-amino-acid chain: LPS-assembly protein LptD (784 aa).

The signal sequence occupies residues 1-24; sequence MKKRIPTLLATMIATALYSQQGLA. Disulfide bonds link Cys-31/Cys-724 and Cys-173/Cys-725.

This sequence belongs to the LptD family. Component of the lipopolysaccharide transport and assembly complex. Interacts with LptE and LptA. Contains two intramolecular disulfide bonds.

It localises to the cell outer membrane. Functionally, together with LptE, is involved in the assembly of lipopolysaccharide (LPS) at the surface of the outer membrane. In Escherichia coli O157:H7, this protein is LPS-assembly protein LptD.